The following is a 74-amino-acid chain: ATP synthase subunit 9, mitochondrial (74 aa).

2 helical membrane-spanning segments follow: residues 8–28 (IGAG…GNVF) and 45–72 (LFGY…LILF).

The protein belongs to the ATPase C chain family. As to quaternary structure, F-type ATPases have 2 components, CF(1) - the catalytic core - and CF(0) - the membrane proton channel. CF(1) has five subunits: alpha(3), beta(3), gamma(1), delta(1), epsilon(1). CF(0) has three main subunits: a, b and c.

It is found in the mitochondrion membrane. This protein is one of the chains of the nonenzymatic membrane component (F0) of mitochondrial ATPase. The sequence is that of ATP synthase subunit 9, mitochondrial (ATP9) from Pisum sativum (Garden pea).